We begin with the raw amino-acid sequence, 203 residues long: Dual-action ribosomal maturation protein DarP (203 aa).

Disordered regions lie at residues 1–31 (MPPMTRKTRIQPIEPVAEEDDNGYDRPSKSQ) and 182–203 (GGASDSDDEAADDAGDDHDDEA). The span at 186–203 (DSDDEAADDAGDDHDDEA) shows a compositional bias: acidic residues.

Belongs to the DarP family.

The protein resides in the cytoplasm. Its function is as follows. Member of a network of 50S ribosomal subunit biogenesis factors which assembles along the 30S-50S interface, preventing incorrect 23S rRNA structures from forming. Promotes peptidyl transferase center (PTC) maturation. The protein is Dual-action ribosomal maturation protein DarP of Burkholderia cenocepacia (strain HI2424).